A 248-amino-acid chain; its full sequence is MRFRVTPYHGNLLGDHERLAAFREAISSRARGLTYDLGAGSGILSFFASEYADRVIAIERDPKIAACAGENLSGLDNVSVVNEDALHYEFSAADTIICEMLDTALIDEEQVPVLRRALKFLRNDGTVIPQAVFNAAEPVTVNFENIMYDENLSQPSSGPMRVYDRVEFRGNLPEIFRGSLKLQASSPFNAIRIISFTLTAPGIICGPTPMMNPPLIIPLEETGDKGEVEIKLSYRMGGGLDSVEASII.

To M.jannaschii MJ1452.

This is an uncharacterized protein from Methanothermobacter thermautotrophicus (strain ATCC 29096 / DSM 1053 / JCM 10044 / NBRC 100330 / Delta H) (Methanobacterium thermoautotrophicum).